We begin with the raw amino-acid sequence, 328 residues long: Radiation response metalloprotease IrrE (328 aa).

Positions 1-31 (MPSANVSPPCPSGVRGGGMGPKAKAEASKPH) are disordered. Zn(2+) is bound at residue His118. Residue Glu119 is part of the active site. The Zn(2+) site is built by His122 and Glu149. Disordered stretches follow at residues 217 to 238 (PREQ…LTVR) and 309 to 328 (RLGR…DAAQ).

In terms of biological role, plays a central regulatory role in DNA repair and protection pathways in response to radiation stress. Acts as a site-specific metalloprotease that cleaves and inactivates the repressor protein DdrO, resulting in induced expression of genes required for DNA repair and cell survival after exposure to radiation. Regulates the expression of dozens of proteins from different pathways, including the important DNA repair proteins RecA and PprA. Binds to the promoters of recA and pprA. This chain is Radiation response metalloprotease IrrE, found in Deinococcus radiodurans (strain ATCC 13939 / DSM 20539 / JCM 16871 / CCUG 27074 / LMG 4051 / NBRC 15346 / NCIMB 9279 / VKM B-1422 / R1).